Here is a 110-residue protein sequence, read N- to C-terminus: MAGWFELSKSSDNQFRFVLKAGNGETILTSELYTSKTSAEKGIASVRSNSPQEERYEKKTASNGKFYFNLKAANHQIIGSSQMYATAQSRETGIASVKANGTSQTVKDNT.

2 repeat units span residues 10-58 and 61-109.

Belongs to the UPF0339 family. Duplicated subfamily.

The polypeptide is UPF0339 protein YegP (yegP) (Escherichia coli (strain K12)).